We begin with the raw amino-acid sequence, 84 residues long: Small ribosomal subunit protein bS20 (84 aa).

Residues 1 to 25 (MANIVSNEKTYRHTQKVRKENHAKM) form a disordered region.

The protein belongs to the bacterial ribosomal protein bS20 family.

Binds directly to 16S ribosomal RNA. The protein is Small ribosomal subunit protein bS20 of Ureaplasma parvum serovar 3 (strain ATCC 700970).